A 411-amino-acid polypeptide reads, in one-letter code: Class E basic helix-loop-helix protein 40 (411 aa).

Residues 1–21 (MERIPSAQPPPTCLPKTPGLE) are disordered. Residues 1–139 (MERIPSAQPP…LSGKNIEAGQ (139 aa)) form an essential for interaction with BMAL1, E-box binding and repressor activity against the CLOCK-BMAL1 heterodimer region. The bHLH domain maps to 52–107 (TYKLPHRLIEKKRRDRINECIAQLKDLLPEHLKLTTLGHLEKAVVLELTLKHVKAL). The necessary for interaction with RXRA and repressor activity against RXRA stretch occupies residues 75-79 (LKDLL). An Orange domain is found at 142 to 175 (FCSGFQTCAREVLQYLAKHENTRDLKSSQLVTHL). A Glycyl lysine isopeptide (Lys-Gly) (interchain with G-Cter in SUMO1, SUMO2 and SUMO3) cross-link involves residue K159. Residue K167 forms a Glycyl lysine isopeptide (Lys-Gly) (interchain with G-Cter in SUMO2) linkage. A disordered region spans residues 186 to 293 (SASRKPLDSA…EPPTKKSRMQ (108 aa)). S235 carries the phosphoserine modification. The segment covering 248–271 (ELEKGDLRSEQPYFKSDHGRRFTV) has biased composition (basic and acidic residues). K279 is covalently cross-linked (Glycyl lysine isopeptide (Lys-Gly) (interchain with G-Cter in SUMO1); alternate). Residue K279 forms a Glycyl lysine isopeptide (Lys-Gly) (interchain with G-Cter in SUMO1, SUMO2 and SUMO3); alternate linkage. Residue K279 forms a Glycyl lysine isopeptide (Lys-Gly) (interchain with G-Cter in SUMO2); alternate linkage. Residue K288 forms a Glycyl lysine isopeptide (Lys-Gly) (interchain with G-Cter in SUMO2) linkage. S383 carries the phosphoserine modification.

In terms of assembly, homodimer. Heterodimer with BHLHE41/DEC2. Interacts with TCF3/E47. Interacts with ubiquitin-conjugating enzyme UBE2I/UBC9. Interacts with HDAC1, SUMO1, RXRA and BMAL1. In terms of processing, ubiquitinated; which may lead to proteasomal degradation. Sumoylation inhibits its ubiquitination and promotes its negative regulation of the CLOCK-BMAL1 heterodimer transcriptional activator activity. As to expression, expressed in heart, spleen, lung, liver, muscle, kidney, uterus and gut. Highly expressed in the cerebral cortex, especially in the fifth layer, thalamus, superior colliculus, olfactory bulb, piriform cortex, hippocampus and hypothalamic nuclei.

It is found in the cytoplasm. The protein localises to the nucleus. Transcriptional repressor involved in the regulation of the circadian rhythm by negatively regulating the activity of the clock genes and clock-controlled genes. Acts as the negative limb of a novel autoregulatory feedback loop (DEC loop) which differs from the one formed by the PER and CRY transcriptional repressors (PER/CRY loop). Both these loops are interlocked as it represses the expression of PER1/2 and in turn is repressed by PER1/2 and CRY1/2. Represses the activity of the circadian transcriptional activator: CLOCK-BMAL1|BMAL2 heterodimer by competing for the binding to E-box elements (5'-CACGTG-3') found within the promoters of its target genes. Negatively regulates its own expression and the expression of DBP and BHLHE41/DEC2. Acts as a corepressor of RXR and the RXR-LXR heterodimers and represses the ligand-induced RXRA and NR1H3/LXRA transactivation activity. May be involved in the regulation of chondrocyte differentiation via the cAMP pathway. Represses the transcription of NR0B2 and attentuates the transactivation of NR0B2 by the CLOCK-BMAL1 complex. Drives the circadian rhythm of blood pressure through transcriptional repression of ATP1B1 in the cardiovascular system. This chain is Class E basic helix-loop-helix protein 40 (Bhlhe40), found in Rattus norvegicus (Rat).